Here is a 489-residue protein sequence, read N- to C-terminus: Ketol-acid reductoisomerase (NADP(+)) (489 aa).

Residues 16 to 207 (IKKCRFMEKK…GGHRAGVLES (192 aa)) enclose the KARI N-terminal Rossmann domain. Residues 44-47 (CGSQ), Arg-67, Ser-77, and 107-109 (DKQ) each bind NADP(+). Residue His-131 is part of the active site. Gly-157 lines the NADP(+) pocket. 2 KARI C-terminal knotted domains span residues 208–343 (SFVA…QSPD) and 344–483 (YDKK…MKNM). Mg(2+) contacts are provided by Asp-216, Glu-220, Glu-388, and Glu-392. Ser-413 contributes to the substrate binding site.

It belongs to the ketol-acid reductoisomerase family. Requires Mg(2+) as cofactor.

The enzyme catalyses (2R)-2,3-dihydroxy-3-methylbutanoate + NADP(+) = (2S)-2-acetolactate + NADPH + H(+). It catalyses the reaction (2R,3R)-2,3-dihydroxy-3-methylpentanoate + NADP(+) = (S)-2-ethyl-2-hydroxy-3-oxobutanoate + NADPH + H(+). Its pathway is amino-acid biosynthesis; L-isoleucine biosynthesis; L-isoleucine from 2-oxobutanoate: step 2/4. It participates in amino-acid biosynthesis; L-valine biosynthesis; L-valine from pyruvate: step 2/4. Functionally, involved in the biosynthesis of branched-chain amino acids (BCAA). Catalyzes an alkyl-migration followed by a ketol-acid reduction of (S)-2-acetolactate (S2AL) to yield (R)-2,3-dihydroxy-isovalerate. In the isomerase reaction, S2AL is rearranged via a Mg-dependent methyl migration to produce 3-hydroxy-3-methyl-2-ketobutyrate (HMKB). In the reductase reaction, this 2-ketoacid undergoes a metal-dependent reduction by NADPH to yield (R)-2,3-dihydroxy-isovalerate. The sequence is that of Ketol-acid reductoisomerase (NADP(+)) from Buchnera aphidicola subsp. Diuraphis noxia.